The chain runs to 332 residues: Ornithine carbamoyltransferase 1, catabolic (332 aa).

Residues Ser-56–Thr-59, Gln-83, Arg-107, and His-134–Gln-137 each bind carbamoyl phosphate. L-ornithine-binding positions include Asn-167, Asp-231, and Ser-235 to Met-236. Residues Cys-273–Leu-274 and Arg-318 contribute to the carbamoyl phosphate site.

The protein belongs to the aspartate/ornithine carbamoyltransferase superfamily. OTCase family.

The protein localises to the cytoplasm. The catalysed reaction is carbamoyl phosphate + L-ornithine = L-citrulline + phosphate + H(+). Its pathway is amino-acid degradation; L-arginine degradation via ADI pathway; carbamoyl phosphate from L-arginine: step 2/2. Reversibly catalyzes the transfer of the carbamoyl group from carbamoyl phosphate (CP) to the N(epsilon) atom of ornithine (ORN) to produce L-citrulline. The chain is Ornithine carbamoyltransferase 1, catabolic (arcB1) from Streptococcus agalactiae serotype III (strain NEM316).